Reading from the N-terminus, the 692-residue chain is MKKNSQIRAKIIELREKIEKWNHHYYQLQNPLVDDLVYDKTLRELEKLERENFFLFSLEELNQSPSQKVGSKITSKFEKVAHSSPMLSLNKAYSNEELEKWAKKAREILKTVTFFVEPKIDGIALSLFYQNGNLIKALTRGDGVFGENVLVNALKINDEFIPKKINYLEDLEVRGEIYIDNSTFASLQLETKKFKNPRNAASGILRRYKNHKPKIDAKSIKFLEEESDFRYLKSFFYTLVNPEKHKINSQFDSINFLRNLGFQVNPFQKKCSDLKDVFNFISIIKQKRDFLNYNIDGVVVKVNEFSIYEKLGSTSKFPHSAIAFKFEDDIAKTKLLAIFATIGRTGKVTYNAKIEPVTLAGSKISSAILPNYSYIENLKLNLNTEVYIKKAGEIIPQIIGSVHNYPKTNFSIVKNCPKCNSELVNSESGLDQFCQNQFCPEIILQKIVHFCSKNALNIESLAQKRIEKFLEKGLISSACDIFYLKDKLELIYERLSNKNQLLTKQNASQSMQIKSIMKLLNEVERAKNIDFYRLIFGLGIRNVGLKAAKILSRYASNLSELRNLDFNLLKNQHDFGPVIIESLIDYFNNQKNSEQLNCLETVGFNFKTTFLTNQSNSWASFAISGKLSKPRDEYVRIIEESGASFHESVTKKTDFLLLGQSAGSKIEKAKKAGIKIINEVQFFDLIKNSKKT.

NAD(+) is bound by residues D35–D39, S88–L89, and E117. K119 (N6-AMP-lysine intermediate) is an active-site residue. NAD(+)-binding residues include R140, E176, K301, and K325. Zn(2+) is bound by residues C416, C419, C434, and C439. The region spanning L611–T692 is the BRCT domain.

Belongs to the NAD-dependent DNA ligase family. LigA subfamily. Requires Mg(2+) as cofactor. Mn(2+) is required as a cofactor.

It carries out the reaction NAD(+) + (deoxyribonucleotide)n-3'-hydroxyl + 5'-phospho-(deoxyribonucleotide)m = (deoxyribonucleotide)n+m + AMP + beta-nicotinamide D-nucleotide.. Functionally, DNA ligase that catalyzes the formation of phosphodiester linkages between 5'-phosphoryl and 3'-hydroxyl groups in double-stranded DNA using NAD as a coenzyme and as the energy source for the reaction. It is essential for DNA replication and repair of damaged DNA. In Mesomycoplasma hyopneumoniae (strain 7448) (Mycoplasma hyopneumoniae), this protein is DNA ligase.